A 31-amino-acid polypeptide reads, in one-letter code: Cliotide T10 (31 aa).

The cyclopeptide (Gly-Asn) cross-link spans 1-31 (GIPCGESCVYIPCTVTALLGCSCKDKVCYKN). Disulfide bonds link Cys4–Cys21, Cys8–Cys23, and Cys13–Cys28.

Post-translationally, contains 3 disulfide bonds. In terms of processing, this is a cyclic peptide. Expressed in seed, root and nodule but not in flower, stem, shoot, leaf and pod (at protein level).

Probably participates in a plant defense mechanism. The polypeptide is Cliotide T10 (Clitoria ternatea (Butterfly pea)).